A 202-amino-acid polypeptide reads, in one-letter code: LexA repressor (202 aa).

The H-T-H motif DNA-binding region spans 28 to 48; the sequence is RAEIAQRLGFRSPNAAEEHLK. Active-site for autocatalytic cleavage activity residues include Ser119 and Lys156.

It belongs to the peptidase S24 family. Homodimer.

It catalyses the reaction Hydrolysis of Ala-|-Gly bond in repressor LexA.. Functionally, represses a number of genes involved in the response to DNA damage (SOS response), including recA and lexA. Binds to the 16 bp palindromic sequence 5'-CTGTATATATATACAG-3'. In the presence of single-stranded DNA, RecA interacts with LexA causing an autocatalytic cleavage which disrupts the DNA-binding part of LexA, leading to derepression of the SOS regulon and eventually DNA repair. This Salmonella agona (strain SL483) protein is LexA repressor.